The sequence spans 56 residues: Large ribosomal subunit protein bL32c (56 aa).

Positions 1–20 (MAAPKKRTSKSRKNMRKSTW) are enriched in basic residues. Residues 1-28 (MAAPKKRTSKSRKNMRKSTWKRQAATQA) form a disordered region.

Belongs to the bacterial ribosomal protein bL32 family.

Its subcellular location is the plastid. The protein localises to the chloroplast. This Mesostigma viride (Green alga) protein is Large ribosomal subunit protein bL32c (rpl32).